Here is a 441-residue protein sequence, read N- to C-terminus: Leucine-rich repeat-containing protein 17 (441 aa).

An N-terminal signal peptide occupies residues 1–18 (MRVVTIVILLCFCKAAEL). LRR repeat units lie at residues 82 to 103 (DLLHMLLARNKIRTLKNNMFSK), 106 to 127 (KLKSLDLQQNEISKIESEAFFG), and 130 to 151 (KLTTLLLQHNQIKVLTEEVFIY). The LRRCT 1 domain maps to 163–214 (NPWHCTCEIETLISMLQIPRNRNLGNYAKCESPQEQKNKKLRQIKSEQLCNE). The region spanning 225–268 (QVSGRPPVIKPEVDSTFCHNYVFPIQTLDCKRKELKKVPNNIPP) is the LRRNT domain. LRR repeat units lie at residues 269–290 (DIVKLDLSYNKINQLRPKEFED), 293–314 (ELKKLNLSSNGIEFIDPAAFLG), and 317–340 (HLEELDLSNNSLQNFDYGVLEDLY). The region spanning 350–402 (NPWRCDYNIHYLYYWLKHHYNVHFNGLECKTPEEYKGWSVGKYIRSYYEECPK) is the LRRCT 2 domain.

Expressed in osteoblast cell lines. Well expressed in ovary, heart, pancreas, skeletal muscle, lung, and fetal kidney and lung and only at the basal levels in the other tissues examined including adult kidney. More expressed in S-type neuroblastoma cells than in N-type neuroblastoma cells.

The protein localises to the secreted. The protein resides in the extracellular space. Its function is as follows. Involved in bone homeostasis. Acts as a negative regulator of RANKL-induced osteoclast precursor differentiation from bone marrow precursors. The sequence is that of Leucine-rich repeat-containing protein 17 (LRRC17) from Homo sapiens (Human).